A 136-amino-acid polypeptide reads, in one-letter code: Large ribosomal subunit protein uL16 (136 aa).

Belongs to the universal ribosomal protein uL16 family. In terms of assembly, part of the 50S ribosomal subunit.

Functionally, binds 23S rRNA and is also seen to make contacts with the A and possibly P site tRNAs. This Histophilus somni (strain 129Pt) (Haemophilus somnus) protein is Large ribosomal subunit protein uL16.